The primary structure comprises 148 residues: Protein-arginine-phosphatase (148 aa).

The Nucleophile role is filled by Cys9. Substrate is bound at residue 10-15 (TGNTCR). Residue Arg15 is part of the active site. The Proton donor role is filled by Asp117.

The protein belongs to the low molecular weight phosphotyrosine protein phosphatase family. Is present in solution as a mixture of monomers, dimers and higher order oligomers (trimers and tetramers).

It carries out the reaction N(omega)-phospho-L-arginyl-[protein] + H2O = L-arginyl-[protein] + phosphate. With respect to regulation, irreversibly inhibited by the synthetic inhibitor cyc-SeCN-amidine, which inactivates the enzyme by inducing disulfide bond formation between the two active site cysteine residues Cys-9 and Cys-14. Catalyzes the specific dephosphorylation of phosphoarginine residues in proteins. Probably counteracts the protein arginine kinase McsB in vivo. Exhibits almost no activity against pTyr peptides. Protein arginine phosphorylation has a physiologically important role and is involved in the regulation of many critical cellular processes, such as protein homeostasis, motility, competence, and stringent and stress responses, by regulating gene expression and protein activity. This chain is Protein-arginine-phosphatase (ywle), found in Geobacillus stearothermophilus (Bacillus stearothermophilus).